Here is a 533-residue protein sequence, read N- to C-terminus: Di/tripeptide-binding protein 4 (533 aa).

The signal sequence occupies residues 1 to 25 (MLHPLLRHLPLALALALCAAGAAQA).

The protein belongs to the bacterial solute-binding protein 5 family. In terms of assembly, the complex is composed of two ATP-binding proteins (DppD and DppF), two transmembrane proteins (DppB and DppC) and a solute-binding protein (DppA4). Five orthologous SBPs (DppA1-A5) are present in P.aeruginosa, which increases the substrate specificity of the DppBCDF transporter.

Functionally, part of the ABC transporter DppABCDF involved in the uptake of various di/tripeptides. Prefers dipeptides with acidic residues at the C-terminal end. Efficiently uses tripeptides. This is Di/tripeptide-binding protein 4 from Pseudomonas aeruginosa (strain UCBPP-PA14).